The primary structure comprises 81 residues: MADEAIKNGVLDILADLTGSDDVKTNLDLNLFETGLLDSMGTVQLLLELQSQFGVEAPVSEFDRSQWDTPNKIIAKVEQAQ.

Residues 1–81 form the Carrier domain; it reads MADEAIKNGV…KIIAKVEQAQ (81 aa). Residue S39 is modified to O-(pantetheine 4'-phosphoryl)serine.

Belongs to the DltC family. 4'-phosphopantetheine is transferred from CoA to a specific serine of apo-DCP.

The protein resides in the cytoplasm. It participates in cell wall biogenesis; lipoteichoic acid biosynthesis. Functionally, carrier protein involved in the D-alanylation of lipoteichoic acid (LTA). The loading of thioester-linked D-alanine onto DltC is catalyzed by D-alanine--D-alanyl carrier protein ligase DltA. The DltC-carried D-alanyl group is further transferred to cell membrane phosphatidylglycerol (PG) by forming an ester bond, probably catalyzed by DltD. D-alanylation of LTA plays an important role in modulating the properties of the cell wall in Gram-positive bacteria, influencing the net charge of the cell wall. The chain is D-alanyl carrier protein from Lacticaseibacillus casei (strain BL23) (Lactobacillus casei).